A 391-amino-acid polypeptide reads, in one-letter code: Coiled-coil domain-containing protein 85C-A (391 aa).

2 coiled-coil regions span residues Lys23–Cys87 and Phe121–Ile146. The tract at residues Asn154–Thr212 is disordered. Low complexity-rich tracts occupy residues Ser158 to Ser175 and Asp183 to Ser195.

The protein belongs to the CCDC85 family.

The protein resides in the cell junction. Its subcellular location is the tight junction. It is found in the adherens junction. In terms of biological role, may play a role in cell-cell adhesion and epithelium development through its interaction with proteins of the beta-catenin family. May play an important role in cortical development, especially in the maintenance of radial glia. This chain is Coiled-coil domain-containing protein 85C-A (ccdc85ca), found in Danio rerio (Zebrafish).